The primary structure comprises 193 residues: Peptidyl-tRNA hydrolase (193 aa).

A tRNA-binding site is contributed by Y15. H20 serves as the catalytic Proton acceptor. 3 residues coordinate tRNA: F65, N67, and N113.

It belongs to the PTH family. In terms of assembly, monomer.

It localises to the cytoplasm. The catalysed reaction is an N-acyl-L-alpha-aminoacyl-tRNA + H2O = an N-acyl-L-amino acid + a tRNA + H(+). In terms of biological role, hydrolyzes ribosome-free peptidyl-tRNAs (with 1 or more amino acids incorporated), which drop off the ribosome during protein synthesis, or as a result of ribosome stalling. Catalyzes the release of premature peptidyl moieties from peptidyl-tRNA molecules trapped in stalled 50S ribosomal subunits, and thus maintains levels of free tRNAs and 50S ribosomes. This chain is Peptidyl-tRNA hydrolase, found in Ehrlichia canis (strain Jake).